Reading from the N-terminus, the 1404-residue chain is DNA-directed RNA polymerase subunit beta' (1404 aa).

Residues C60, C62, C75, and C78 each coordinate Zn(2+). D449, D451, and D453 together coordinate Mg(2+). Positions 778, 852, 859, and 862 each coordinate Zn(2+). The disordered stretch occupies residues 1380–1404 (LDRPLEEEEEEEIPQAIAEESDAEE). The segment covering 1384–1404 (LEEEEEEEIPQAIAEESDAEE) has biased composition (acidic residues).

This sequence belongs to the RNA polymerase beta' chain family. As to quaternary structure, the RNAP catalytic core consists of 2 alpha, 1 beta, 1 beta' and 1 omega subunit. When a sigma factor is associated with the core the holoenzyme is formed, which can initiate transcription. It depends on Mg(2+) as a cofactor. Zn(2+) is required as a cofactor.

The enzyme catalyses RNA(n) + a ribonucleoside 5'-triphosphate = RNA(n+1) + diphosphate. DNA-dependent RNA polymerase catalyzes the transcription of DNA into RNA using the four ribonucleoside triphosphates as substrates. This Leptospira interrogans serogroup Icterohaemorrhagiae serovar Lai (strain 56601) protein is DNA-directed RNA polymerase subunit beta'.